The sequence spans 89 residues: Small ribosomal subunit protein uS17 (89 aa).

The protein belongs to the universal ribosomal protein uS17 family. Part of the 30S ribosomal subunit.

One of the primary rRNA binding proteins, it binds specifically to the 5'-end of 16S ribosomal RNA. In Variovorax paradoxus (strain S110), this protein is Small ribosomal subunit protein uS17.